The primary structure comprises 351 residues: Transaldolase (351 aa).

Lysine 138 (schiff-base intermediate with substrate) is an active-site residue.

Belongs to the transaldolase family. Type 2 subfamily.

It localises to the cytoplasm. It carries out the reaction D-sedoheptulose 7-phosphate + D-glyceraldehyde 3-phosphate = D-erythrose 4-phosphate + beta-D-fructose 6-phosphate. Its pathway is carbohydrate degradation; pentose phosphate pathway; D-glyceraldehyde 3-phosphate and beta-D-fructose 6-phosphate from D-ribose 5-phosphate and D-xylulose 5-phosphate (non-oxidative stage): step 2/3. Transaldolase is important for the balance of metabolites in the pentose-phosphate pathway. The protein is Transaldolase of Neisseria gonorrhoeae (strain ATCC 700825 / FA 1090).